The chain runs to 335 residues: Holliday junction branch migration complex subunit RuvB (335 aa).

The tract at residues Val4 to Tyr184 is large ATPase domain (RuvB-L). Residues Ile23, Arg24, Gly65, Lys68, Thr69, Thr70, Glu131 to Tyr133, Arg174, Tyr184, and Arg221 contribute to the ATP site. Thr69 is a Mg(2+) binding site. The small ATPAse domain (RuvB-S) stretch occupies residues Ser185–Asp255. Positions Leu258 to Lys335 are head domain (RuvB-H). DNA contacts are provided by Arg294, Arg313, and Arg318.

It belongs to the RuvB family. Homohexamer. Forms an RuvA(8)-RuvB(12)-Holliday junction (HJ) complex. HJ DNA is sandwiched between 2 RuvA tetramers; dsDNA enters through RuvA and exits via RuvB. An RuvB hexamer assembles on each DNA strand where it exits the tetramer. Each RuvB hexamer is contacted by two RuvA subunits (via domain III) on 2 adjacent RuvB subunits; this complex drives branch migration. In the full resolvosome a probable DNA-RuvA(4)-RuvB(12)-RuvC(2) complex forms which resolves the HJ.

Its subcellular location is the cytoplasm. It carries out the reaction ATP + H2O = ADP + phosphate + H(+). Functionally, the RuvA-RuvB-RuvC complex processes Holliday junction (HJ) DNA during genetic recombination and DNA repair, while the RuvA-RuvB complex plays an important role in the rescue of blocked DNA replication forks via replication fork reversal (RFR). RuvA specifically binds to HJ cruciform DNA, conferring on it an open structure. The RuvB hexamer acts as an ATP-dependent pump, pulling dsDNA into and through the RuvAB complex. RuvB forms 2 homohexamers on either side of HJ DNA bound by 1 or 2 RuvA tetramers; 4 subunits per hexamer contact DNA at a time. Coordinated motions by a converter formed by DNA-disengaged RuvB subunits stimulates ATP hydrolysis and nucleotide exchange. Immobilization of the converter enables RuvB to convert the ATP-contained energy into a lever motion, pulling 2 nucleotides of DNA out of the RuvA tetramer per ATP hydrolyzed, thus driving DNA branch migration. The RuvB motors rotate together with the DNA substrate, which together with the progressing nucleotide cycle form the mechanistic basis for DNA recombination by continuous HJ branch migration. Branch migration allows RuvC to scan DNA until it finds its consensus sequence, where it cleaves and resolves cruciform DNA. The chain is Holliday junction branch migration complex subunit RuvB from Histophilus somni (strain 129Pt) (Haemophilus somnus).